Consider the following 172-residue polypeptide: MVDKLKSYTKEDLIASGRSELFGENGPPLPSGNMLMMDRIIEMTENGGTHDKGYIEAELDITPDLWFFDCHFIDDPVMPGCLGLDAMWQLVGFFLGWLGGEGKGRALGVGEVKFTGQVLPTAKKVTYRINFKRVINRKLIMGLADGEVLVDGKIIYTATDLKVGLFKDTSAF.

H71 is an active-site residue.

This sequence belongs to the thioester dehydratase family. FabA subfamily. In terms of assembly, homodimer.

The protein localises to the cytoplasm. It catalyses the reaction a (3R)-hydroxyacyl-[ACP] = a (2E)-enoyl-[ACP] + H2O. The catalysed reaction is (3R)-hydroxydecanoyl-[ACP] = (2E)-decenoyl-[ACP] + H2O. It carries out the reaction (2E)-decenoyl-[ACP] = (3Z)-decenoyl-[ACP]. It participates in lipid metabolism; fatty acid biosynthesis. Functionally, necessary for the introduction of cis unsaturation into fatty acids. Catalyzes the dehydration of (3R)-3-hydroxydecanoyl-ACP to E-(2)-decenoyl-ACP and then its isomerization to Z-(3)-decenoyl-ACP. Can catalyze the dehydratase reaction for beta-hydroxyacyl-ACPs with saturated chain lengths up to 16:0, being most active on intermediate chain length. The polypeptide is 3-hydroxydecanoyl-[acyl-carrier-protein] dehydratase (Photorhabdus laumondii subsp. laumondii (strain DSM 15139 / CIP 105565 / TT01) (Photorhabdus luminescens subsp. laumondii)).